Here is a 219-residue protein sequence, read N- to C-terminus: tRNA (guanine-N(7)-)-methyltransferase (219 aa).

Residues aspartate 47, glutamate 72, asparagine 99, and aspartate 125 each coordinate S-adenosyl-L-methionine. Aspartate 125 is an active-site residue. The substrate site is built by lysine 129 and aspartate 161.

This sequence belongs to the class I-like SAM-binding methyltransferase superfamily. TrmB family.

It catalyses the reaction guanosine(46) in tRNA + S-adenosyl-L-methionine = N(7)-methylguanosine(46) in tRNA + S-adenosyl-L-homocysteine. The protein operates within tRNA modification; N(7)-methylguanine-tRNA biosynthesis. Functionally, catalyzes the formation of N(7)-methylguanine at position 46 (m7G46) in tRNA. This Nostoc sp. (strain PCC 7120 / SAG 25.82 / UTEX 2576) protein is tRNA (guanine-N(7)-)-methyltransferase.